The primary structure comprises 151 residues: Regulatory protein RecX (151 aa).

It belongs to the RecX family.

It is found in the cytoplasm. Its function is as follows. Modulates RecA activity. This chain is Regulatory protein RecX, found in Chlorobium phaeobacteroides (strain BS1).